Here is a 341-residue protein sequence, read N- to C-terminus: Glycerol-3-phosphate dehydrogenase [NAD(P)+] (341 aa).

NADPH contacts are provided by serine 14, phenylalanine 15, arginine 35, and lysine 108. Residues lysine 108 and glycine 136 each contribute to the sn-glycerol 3-phosphate site. Position 140 (alanine 140) interacts with NADPH. The sn-glycerol 3-phosphate site is built by lysine 191, aspartate 244, serine 254, arginine 255, and asparagine 256. The Proton acceptor role is filled by lysine 191. Arginine 255 is a binding site for NADPH. NADPH-binding residues include valine 279 and glutamate 281.

It belongs to the NAD-dependent glycerol-3-phosphate dehydrogenase family.

The protein resides in the cytoplasm. It catalyses the reaction sn-glycerol 3-phosphate + NAD(+) = dihydroxyacetone phosphate + NADH + H(+). It carries out the reaction sn-glycerol 3-phosphate + NADP(+) = dihydroxyacetone phosphate + NADPH + H(+). It functions in the pathway membrane lipid metabolism; glycerophospholipid metabolism. Its function is as follows. Catalyzes the reduction of the glycolytic intermediate dihydroxyacetone phosphate (DHAP) to sn-glycerol 3-phosphate (G3P), the key precursor for phospholipid synthesis. The protein is Glycerol-3-phosphate dehydrogenase [NAD(P)+] of Pseudomonas fluorescens (strain ATCC BAA-477 / NRRL B-23932 / Pf-5).